The sequence spans 360 residues: S-adenosylmethionine:tRNA ribosyltransferase-isomerase (360 aa).

The protein belongs to the QueA family. Monomer.

Its subcellular location is the cytoplasm. The enzyme catalyses 7-aminomethyl-7-carbaguanosine(34) in tRNA + S-adenosyl-L-methionine = epoxyqueuosine(34) in tRNA + adenine + L-methionine + 2 H(+). It functions in the pathway tRNA modification; tRNA-queuosine biosynthesis. Its function is as follows. Transfers and isomerizes the ribose moiety from AdoMet to the 7-aminomethyl group of 7-deazaguanine (preQ1-tRNA) to give epoxyqueuosine (oQ-tRNA). This chain is S-adenosylmethionine:tRNA ribosyltransferase-isomerase, found in Burkholderia mallei (strain NCTC 10247).